The sequence spans 113 residues: Large ribosomal subunit protein P1 (113 aa).

Residues 84-113 form a disordered region; sequence APAAAAKKETKKEEVKKEESDDDMGMGLFD. Residues 89–102 show a composition bias toward basic and acidic residues; that stretch reads AKKETKKEEVKKEE.

It belongs to the eukaryotic ribosomal protein P1/P2 family. In terms of assembly, P1 and P2 exist as dimers at the large ribosomal subunit.

Plays an important role in the elongation step of protein synthesis. This Dictyostelium discoideum (Social amoeba) protein is Large ribosomal subunit protein P1 (rplp1).